The primary structure comprises 558 residues: Pre-mRNA-processing factor 17 (558 aa).

Disordered stretches follow at residues 1 to 23 and 117 to 197; these read MLVANYSSDSEEQENSQSPNIQP and DDNE…GQNE. Over residues 126 to 141 the composition is skewed to basic and acidic residues; that stretch reads DLKRKSQKIKERREDP. Residues 162–171 show a composition bias toward low complexity; the sequence is SEQSSSPLEY. Residues 180–189 show a composition bias toward basic and acidic residues; sequence LDVKSEKDTE. WD repeat units follow at residues 264 to 304, 308 to 349, 351 to 391, 394 to 433, 437 to 476, 484 to 523, and 526 to 558; these read GHTK…SLLR, GHAR…NCFN, DRLT…IVQA, HHLGGINSITFLENGKRFVTTSDDSSMRFWEYGTPVPIKF, IAMHSMPRVALRPNGKSIACQSLDNCIYVYSAYEKYRQNK, SCSGYSLEVGFSPDGRFVFSGDSSGNACFWDWKTCKLMAK, and AHSGPVQSMAFHPQETSKVATSSIVDGSIKYWD.

In terms of assembly, belongs to the 40S cdc5-associated complex (or cwf complex), a spliceosome sub-complex reminiscent of a late-stage spliceosome composed of the U2, U5 and U6 snRNAs and at least brr2, cdc5, cwf2/prp3, cwf3/syf1, cwf4/syf3, cwf5/ecm2, spp42/cwf6, cwf7/spf27, cwf8, cwf9, cwf10, cwf11, cwf12, prp45/cwf13, cwf14, cwf15, cwf16, cwf17, cwf18, cwf19, cwf20, cwf21, cwf22, cwf23, cwf24, cwf25, cwf26, cyp7/cwf27, cwf28, cwf29/ist3, lea1, msl1, prp5/cwf1, prp10, prp12/sap130, prp17, prp22, sap61, sap62, sap114, sap145, slu7, smb1, smd1, smd3, smf1, smg1 and syf2.

Its subcellular location is the nucleus. Its function is as follows. Functions in the second step of pre-mRNA splicing. Involved in splicing intron which are longer than 200 nucleotides. In Schizosaccharomyces pombe (strain 972 / ATCC 24843) (Fission yeast), this protein is Pre-mRNA-processing factor 17 (prp17).